Consider the following 349-residue polypeptide: Hyaluronidase Tab y 2.0101 (349 aa).

Positions 1–25 are cleaved as a signal peptide; that stretch reads MKLHQGLVCLSVLILLPTCILGDRK. Cystine bridges form between Cys37/Cys328 and Cys205/Cys216. Residues Asn41, Asn81, Asn99, and Asn119 are each glycosylated (N-linked (GlcNAc...) asparagine). Residue Glu129 is the Proton donor of the active site. A glycan (N-linked (GlcNAc...) asparagine) is linked at Asn147. Asn251 and Asn297 each carry an N-linked (GlcNAc...) asparagine glycan.

Belongs to the glycosyl hydrolase 56 family. As to expression, expressed in salivary glands.

Its subcellular location is the secreted. It catalyses the reaction Random hydrolysis of (1-&gt;4)-linkages between N-acetyl-beta-D-glucosamine and D-glucuronate residues in hyaluronate.. Hydrolyzes high molecular weight hyaluronic acid to produce small oligosaccharides. This is Hyaluronidase Tab y 2.0101 from Tabanus yao (Horsefly).